Here is a 429-residue protein sequence, read N- to C-terminus: Ribosomal RNA small subunit methyltransferase B (429 aa).

S-adenosyl-L-methionine contacts are provided by residues 254 to 260, D277, D303, and D322; that span reads CAAPGGK. The Nucleophile role is filled by C375.

It belongs to the class I-like SAM-binding methyltransferase superfamily. RsmB/NOP family.

It is found in the cytoplasm. The catalysed reaction is cytidine(967) in 16S rRNA + S-adenosyl-L-methionine = 5-methylcytidine(967) in 16S rRNA + S-adenosyl-L-homocysteine + H(+). Its function is as follows. Specifically methylates the cytosine at position 967 (m5C967) of 16S rRNA. In Escherichia coli O157:H7, this protein is Ribosomal RNA small subunit methyltransferase B.